The primary structure comprises 326 residues: Protein FAM110C (326 aa).

3 disordered regions span residues 1 to 37 (MRAL…KSAV), 51 to 80 (TLGS…PSTL), and 201 to 221 (VELR…LSSR). Positions 209–221 (KGLQRSQSDLSSR) are enriched in polar residues. The residue at position 255 (S255) is a Phosphoserine.

Belongs to the FAM110 family. As to quaternary structure, interacts with AKT1; the interaction is transient and follows AKT1 activation. Interacts with PPP2CA and alpha-tubulin.

Its subcellular location is the cytoplasm. The protein resides in the cytoskeleton. It is found in the microtubule organizing center. It localises to the centrosome. The protein localises to the spindle pole. Its subcellular location is the nucleus. May play a role in microtubule organization. May play a role in cell spreading and cell migration of epithelial cells; the function may involve the AKT1 signaling pathway. The chain is Protein FAM110C (Fam110c) from Rattus norvegicus (Rat).